The primary structure comprises 578 residues: MLPCLVVLLAALLSLRLGSDAHGTELPSPPSVWFEAEFFHHILHWTPIPNQSESTCYEVALLRYGIESWNSISNCSQTLSYDLTAVTLDLYHSNGYRARVRAVDGSRHSNWTVTNTRFSVDEVTLTVGSVNLEIHNGFILGKIQLPRPKMAPANDTYESIFSHFREYEIAIRKVPGNFTFTHKKVKHENFSLLTSGEVGEFCVQVKPSVASRSNKGMWSKEECISLTRQYFTVTNVIIFFAFVLLLSGALAYCLALQLYVRRRKKLPSVLLFKKPSPFIFISQRPSPETQDTIHPLDEEAFLKVSPELKNLDLHGSTDSGFGSTKPSLQTEEPQFLLPDPHPQADRTLGNREPPVLGDSCSSGSSNSTDSGICLQEPSLSPSTGPTWEQQVGSNSRGQDDSGIDLVQNSEGRAGDTQGGSALGHHSPPEPEVPGEEDPAAVAFQGYLRQTRCAEEKATKTGCLEEESPLTDGLGPKFGRCLVDEAGLHPPALAKGYLKQDPLEMTLASSGAPTGQWNQPTEEWSLLALSSCSDLGISDWSFAHDLAPLGCVAAPGGLLGSFNSDLVTLPLISSLQSSE.

An N-terminal signal peptide occupies residues 1–21 (MLPCLVVLLAALLSLRLGSDA). Topologically, residues 22–235 (HGTELPSPPS…LTRQYFTVTN (214 aa)) are extracellular. 6 N-linked (GlcNAc...) asparagine glycosylation sites follow: Asn-50, Asn-74, Asn-110, Asn-154, Asn-177, and Asn-189. Cysteines 56 and 75 form a disulfide. Cys-202 and Cys-223 form a disulfide bridge. The chain crosses the membrane as a helical span at residues 236–256 (VIIFFAFVLLLSGALAYCLAL). At 257 to 578 (QLYVRRRKKL…PLISSLQSSE (322 aa)) the chain is on the cytoplasmic side. The interval 313-436 (LHGSTDSGFG…PPEPEVPGEE (124 aa)) is disordered. A compositionally biased stretch (polar residues) spans 316-332 (STDSGFGSTKPSLQTEE). The short motif at 318 to 323 (DSGFGS) is the BTRC recognition motif element. Positions 357–371 (GDSCSSGSSNSTDSG) are enriched in low complexity. The segment covering 377-396 (PSLSPSTGPTWEQQVGSNSR) has biased composition (polar residues).

This sequence belongs to the type II cytokine receptor family. Interacts with IL10. Interacts with IL10RB. Interacts (via its cytoplasmic domain) with JAK1 (via N-terminus). Interacts with BTRC; this interaction leads to IL10RA ubiquitination and subsequent degradation. Interacts with STAT3. In terms of assembly, (Microbial infection) Interacts with human cytomegalovirus protein IL10. As to quaternary structure, (Microbial infection) Interacts with Epstein-Barr virus protein IL10. In terms of processing, phosphorylated. Phosphorylation of the cytoplasmic tail induced STAT3 activation. Post-translationally, ubiquitinated by BTRC; ubiquitination leads to endocytosis and subsequent degradation of IL10RA. Primarily expressed in hematopoetic cells including B-cells, T-cells, NK cells, monocytes and macrophages. Not expressed in non-hematopoetic cells such as fibroblasts or endothelial cells.

The protein localises to the cell membrane. Its subcellular location is the cytoplasm. In terms of biological role, cell surface receptor for the cytokine IL10 that participates in IL10-mediated anti-inflammatory functions, limiting excessive tissue disruption caused by inflammation. Upon binding to IL10, induces a conformational change in IL10RB, allowing IL10RB to bind IL10 as well. In turn, the heterotetrameric assembly complex, composed of two subunits of IL10RA and IL10RB, activates the kinases JAK1 and TYK2 that are constitutively associated with IL10RA and IL10RB respectively. These kinases then phosphorylate specific tyrosine residues in the intracellular domain in IL10RA leading to the recruitment and subsequent phosphorylation of STAT3. Once phosphorylated, STAT3 homodimerizes, translocates to the nucleus and activates the expression of anti-inflammatory genes. In addition, IL10RA-mediated activation of STAT3 inhibits starvation-induced autophagy. This is Interleukin-10 receptor subunit alpha (IL10RA) from Homo sapiens (Human).